A 261-amino-acid chain; its full sequence is uncharacterized protein (261 aa).

Positions 1–22 (MAETTEPPSDAGTSQADAMALA) are disordered. Residues 107–127 (IAMAAAVVIICGFTGLSGYIV) form a helical membrane-spanning segment.

The protein to M.tuberculosis Rv1362c.

It localises to the membrane. This is an uncharacterized protein from Mycobacterium tuberculosis (strain ATCC 25618 / H37Rv).